A 62-amino-acid polypeptide reads, in one-letter code: Inner membrane protein p12 (62 aa).

Residues 16 to 36 (LLIVAIIVVIMAIMLYYFWWM) form a helical membrane-spanning segment.

This sequence belongs to the asfivirus inner membrane protein p12 family. In terms of assembly, homomultimer; disulfide-linked. Not glycosylated.

The protein resides in the virion membrane. In African swine fever virus (isolate Tick/Malawi/Lil 20-1/1983) (ASFV), this protein is Inner membrane protein p12.